We begin with the raw amino-acid sequence, 375 residues long: Aldehyde reductase FrzD (375 aa).

FMN-binding residues include alanine 61, glutamine 103, and histidine 171. Tyrosine 176 acts as the Proton donor in catalysis. FMN contacts are provided by lysine 223, glycine 294, and arginine 319.

This sequence belongs to the NADH:flavin oxidoreductase/NADH oxidase family. The cofactor is FMN.

It catalyses the reaction (1S,4S)-4-[(4-hydroxyphenyl)methyl]-2,5-diazaspiro[bicyclo[3.2.1]octane-6,1'-cyclohexane]-2',5'-dien-4'-one + 2 NADPH + 2 H(+) = (1S,4S)-4-[(4-hydroxyphenyl)methyl]-2,5-diazaspiro[bicyclo[3.2.1]octane-6,1'-cyclohexan]-4'-one + 2 NADP(+). Its pathway is alkaloid biosynthesis; ergot alkaloid biosynthesis. Aldehyde reductase; part of the gene cluster that mediates the biosynthesis of the alkaloid (-)-FR901483, a potent immunosuppressant that shows efficacy in animal models and a probable inhibitor of purine nucleotide biosynthesis by targeting phosphoribosylpyrophosphate amidotransferase (PPAT). Within the pathway, FrzD reduces the dienone portion of the pathway intermediates to cyclohexanone. The biosynthesis of (-)-FR901483 starts with the condensation of two L-tyrosines to yield (S,S)-dityrosyl-piperazine. This process occurs in 3 steps with the non-canonical nonribosomal peptide synthetase FrzA catalyzing the reduction of L-tyrosine into L-tyrosinal, the spontaneous condensation of 2 L-tyrosinal units, and the subsequent reduction by the NmrA-like family domain-containing oxidoreductase FrzB. The cytochrome P450 monooxygenase FrzC then performs coupling between N10 and C1' to morph the piperazine into a 1,4-diazabicyclo[3.2.1]octane spiro-fused to a 2,5-cyclohexadienone. The dienone portion is further reduced to cyclohexanone by the flavin-dependent reductase FrzD. The methyltranserases (MTs) FrzE and FrzF are then involved in the methylation at the C10' amine and the C4 phenolic oxygen, respectively. The order of the two MTs appear to be interchangeable. Cleavage of the C9-N10' bond by the dioxygenase FrzG then leads to formation of a conjugated iminium. In addition to the oxidation of C9, an additional dehydrogenation between C7 and C8 can occur to give a likely shunt product. The next biosynthetic step is the intramolecular aldol condensation catalyzed by the newly identified aldolase FrzH to yield an aza-tricyclic product with the formation of a C9-C3' bond. The short-chain dehydrogenase/reductase FrzI then produces dephospho-(-)-FR901483 that is phosphorylated at C4'-OH into (-)-FR901483 by the phosphotransferase FrzJ. The only unassigned enzyme in the cluster is the second cytochrome P450 monooxygenase FrzL. In Cladobotryum sp, this protein is Aldehyde reductase FrzD.